We begin with the raw amino-acid sequence, 133 residues long: Small ribosomal subunit protein uS9 (133 aa).

The tract at residues 102-133 (KPKGLLTRDPREVERKKYGLKKARRAPQFSKR) is disordered. A compositionally biased stretch (basic and acidic residues) spans 107–118 (LTRDPREVERKK). The segment covering 119 to 133 (YGLKKARRAPQFSKR) has biased composition (basic residues).

The protein belongs to the universal ribosomal protein uS9 family.

The protein is Small ribosomal subunit protein uS9 of Deinococcus deserti (strain DSM 17065 / CIP 109153 / LMG 22923 / VCD115).